The following is a 500-amino-acid chain: Ribose import ATP-binding protein RbsA (500 aa).

ABC transporter domains are found at residues 6–242 (LALS…VGRK) and 252–495 (AQQG…VGRN). 38-45 (GENGAGKS) lines the ATP pocket.

The protein belongs to the ABC transporter superfamily. Ribose importer (TC 3.A.1.2.1) family. As to quaternary structure, the complex is composed of an ATP-binding protein (RbsA), two transmembrane proteins (RbsC) and a solute-binding protein (RbsB).

The protein localises to the cell inner membrane. It catalyses the reaction D-ribose(out) + ATP + H2O = D-ribose(in) + ADP + phosphate + H(+). Its function is as follows. Part of the ABC transporter complex RbsABC involved in ribose import. Responsible for energy coupling to the transport system. This Vibrio cholerae serotype O1 (strain ATCC 39315 / El Tor Inaba N16961) protein is Ribose import ATP-binding protein RbsA.